The primary structure comprises 190 residues: ADP-ribosylation factor-like protein 6 (190 aa).

Residue Gly2 is the site of N-myristoyl glycine attachment. Residues 24-31, Thr50, 69-73, Gly72, 130-133, and Ala164 contribute to the GTP site; these read GLDNSGKT, DMAGQ, and NKMD. Thr31 and Thr50 together coordinate Mg(2+).

It belongs to the small GTPase superfamily. Arf family.

The protein resides in the cytoplasm. The protein is ADP-ribosylation factor-like protein 6 of Caenorhabditis briggsae.